Here is a 687-residue protein sequence, read N- to C-terminus: MTTQTLLIELLTEELPPKALNNLGNHFAAAVAEGLEKAQLVDGAAEFTAYASPRRLAVQVKNVKAVQADQKIVKKGPAVANAVKDGAPTKALEGFARGAGAKIEDLTIVHDGKQDVYAYEYVQTGKPLGGLLEDIINAAVKKLPIPKVMRWGSSTFTFVRPVHGLIVLHGGDIVNVSVLGLQSSNQTLGHRFLSNGEITIENADSYAAQMREQGKVVASFAERKAAIQTALEGQARRLNATVAADEALLDEVTALVEYPVVLEAGFEEHFLAVPQECLILTMQQNQKYFPLLDQNGKLMNRFLLVSNLQTEDPSHIIRGNERVLRARLSDAEFFYKQDQKATLESRLPKLANVVYHNKIGSQAERIERLQSIAAHIAKALDADAAAAERAARLAKADLVTEMVGEFPELQGTMGKYYARLDGETEEIAEAIEQHYQPRFAGDKLPESKIAAAVALADKLETLVGIWGIGLIPTGDKDPYALRRAALGILRMLMQYGLDVNELIQTAFDSFPKGLLNEKTPSETADFMQARLAVLLQNDYPQDIVAAVLAKQPRRLDDLTAKLQAVAAFKQLPEAAALAAANKRVQNLLKKADAELGEVNESLLQQDEEKALFAAAQGLQPKIAAAVAEGNFQTALSELASVKPQVDAFFDGVMVMAEDAAVKQNRLNLLNRLAEQMNAVADIALLGE.

The protein belongs to the class-II aminoacyl-tRNA synthetase family. Tetramer of two alpha and two beta subunits.

The protein localises to the cytoplasm. It catalyses the reaction tRNA(Gly) + glycine + ATP = glycyl-tRNA(Gly) + AMP + diphosphate. In Neisseria meningitidis serogroup C / serotype 2a (strain ATCC 700532 / DSM 15464 / FAM18), this protein is Glycine--tRNA ligase beta subunit.